We begin with the raw amino-acid sequence, 930 residues long: Protein translocase subunit SecA (930 aa).

ATP is bound by residues Gln87, 105 to 109 (GEGKT), and Asp515. Zn(2+) contacts are provided by Cys914, Cys916, Cys925, and His926.

Belongs to the SecA family. In terms of assembly, monomer and homodimer. Part of the essential Sec protein translocation apparatus which comprises SecA, SecYEG and auxiliary proteins SecDF-YajC and YidC. The cofactor is Zn(2+).

It localises to the cell inner membrane. The protein localises to the cytoplasm. It carries out the reaction ATP + H2O + cellular proteinSide 1 = ADP + phosphate + cellular proteinSide 2.. Part of the Sec protein translocase complex. Interacts with the SecYEG preprotein conducting channel. Has a central role in coupling the hydrolysis of ATP to the transfer of proteins into and across the cell membrane, serving both as a receptor for the preprotein-SecB complex and as an ATP-driven molecular motor driving the stepwise translocation of polypeptide chains across the membrane. The protein is Protein translocase subunit SecA of Cupriavidus metallidurans (strain ATCC 43123 / DSM 2839 / NBRC 102507 / CH34) (Ralstonia metallidurans).